The following is a 137-amino-acid chain: Putative pre-16S rRNA nuclease (137 aa).

It belongs to the YqgF nuclease family.

The protein resides in the cytoplasm. Could be a nuclease involved in processing of the 5'-end of pre-16S rRNA. This Clostridium botulinum (strain Alaska E43 / Type E3) protein is Putative pre-16S rRNA nuclease.